The following is a 287-amino-acid chain: Probable ribosomal RNA small subunit methyltransferase A (287 aa).

His29, Leu31, Gly56, Glu77, Asp102, and Asn117 together coordinate S-adenosyl-L-methionine.

Belongs to the class I-like SAM-binding methyltransferase superfamily. rRNA adenine N(6)-methyltransferase family. RsmA subfamily.

Its subcellular location is the cytoplasm. Functionally, specifically dimethylates two adjacent adenosines in the loop of a conserved hairpin near the 3'-end of 16S rRNA in the 30S particle. May play a critical role in biogenesis of 30S subunits. This is Probable ribosomal RNA small subunit methyltransferase A from Methanosarcina barkeri (strain Fusaro / DSM 804).